A 146-amino-acid polypeptide reads, in one-letter code: Cytochrome c-type biogenesis protein CcmE (146 aa).

Residues 1–8 (MHPKRKKR) are Cytoplasmic-facing. Residues 9-29 (LLIVLAGLAVVAVASGLILNA) form a helical; Signal-anchor for type II membrane protein membrane-spanning segment. Residues 30-146 (FRSNLVFFHT…IQRAGETVVQ (117 aa)) are Periplasmic-facing. Heme contacts are provided by histidine 124 and tyrosine 128.

Belongs to the CcmE/CycJ family.

It localises to the cell inner membrane. Functionally, heme chaperone required for the biogenesis of c-type cytochromes. Transiently binds heme delivered by CcmC and transfers the heme to apo-cytochromes in a process facilitated by CcmF and CcmH. The chain is Cytochrome c-type biogenesis protein CcmE from Laribacter hongkongensis (strain HLHK9).